The primary structure comprises 331 residues: Biotin synthase (331 aa).

A Radical SAM core domain is found at 48 to 278; sequence FDSQKFEFCS…SAELRLCGGR (231 aa). [4Fe-4S] cluster is bound by residues C66, C70, and C73. 4 residues coordinate [2Fe-2S] cluster: C110, C143, C203, and R273.

Belongs to the radical SAM superfamily. Biotin synthase family. In terms of assembly, homodimer. [4Fe-4S] cluster is required as a cofactor. It depends on [2Fe-2S] cluster as a cofactor.

It catalyses the reaction (4R,5S)-dethiobiotin + (sulfur carrier)-SH + 2 reduced [2Fe-2S]-[ferredoxin] + 2 S-adenosyl-L-methionine = (sulfur carrier)-H + biotin + 2 5'-deoxyadenosine + 2 L-methionine + 2 oxidized [2Fe-2S]-[ferredoxin]. Its pathway is cofactor biosynthesis; biotin biosynthesis; biotin from 7,8-diaminononanoate: step 2/2. Functionally, catalyzes the conversion of dethiobiotin (DTB) to biotin by the insertion of a sulfur atom into dethiobiotin via a radical-based mechanism. The polypeptide is Biotin synthase (Hydrogenobaculum sp. (strain Y04AAS1)).